The primary structure comprises 259 residues: Major prion protein (259 aa).

The first 24 residues, 1-24 (MGKIQLGYWILVLFIVTWSDLGLC), serve as a signal peptide directing secretion. An interaction with GRB2, ERI3 and SYN1 region spans residues 25 to 235 (KKPKPRPGGG…EYEAAAQRAY (211 aa)). The tract at residues 29-110 (PRPGGGWNSG…GYNKWKPDKP (82 aa)) is disordered. Gly63, Gly64, His72, Gly74, His82, Gly84, His92, and Gly94 together coordinate Cu(2+). Positions 91-101 (PHGGSNWGQGG) are enriched in gly residues. Cys184 and Cys219 are oxidised to a cystine. N-linked (GlcNAc...) asparagine glycans are attached at residues Asn186 and Asn202. Asn236 carries the GPI-anchor amidated asparagine lipid modification. A propeptide spans 237-259 (MAFFSAPPVTLLFLSFLIFLIVS) (removed in mature form).

Belongs to the prion family. As to quaternary structure, monomer and homodimer. Has a tendency to aggregate into amyloid fibrils containing a cross-beta spine, formed by a steric zipper of superposed beta-strands. Soluble oligomers may represent an intermediate stage on the path to fibril formation. Copper binding may promote oligomerization. Interacts with GRB2, APP, ERI3/PRNPIP and SYN1. Mislocalized cytosolically exposed PrP interacts with MGRN1; this interaction alters MGRN1 subcellular location and causes lysosomal enlargement. Interacts with KIAA1191.

The protein resides in the cell membrane. Its subcellular location is the golgi apparatus. Its function is as follows. Its primary physiological function is unclear. Has cytoprotective activity against internal or environmental stresses. May play a role in neuronal development and synaptic plasticity. May be required for neuronal myelin sheath maintenance. May play a role in iron uptake and iron homeostasis. Soluble oligomers are toxic to cultured neuroblastoma cells and induce apoptosis (in vitro). Association with GPC1 (via its heparan sulfate chains) targets PRNP to lipid rafts. Also provides Cu(2+) or Zn(2+) for the ascorbate-mediated GPC1 deaminase degradation of its heparan sulfate side chains. The polypeptide is Major prion protein (PRNP) (Trichosurus vulpecula (Brush-tailed possum)).